Reading from the N-terminus, the 228-residue chain is Small ribosomal subunit protein uS10m (228 aa).

Residues 1–17 (MKRYMFGTLPRVQPKRC) constitute a mitochondrion transit peptide.

This sequence belongs to the universal ribosomal protein uS10 family. Component of the mitochondrial small ribosomal subunit (mt-SSU). Mature yeast 74S mitochondrial ribosomes consist of a small (37S) and a large (54S) subunit. The 37S small subunit contains a 15S ribosomal RNA (15S mt-rRNA) and at least 32 different proteins. The 54S large subunit contains a 21S rRNA (21S mt-rRNA) and at least 45 different proteins.

It localises to the mitochondrion. Its function is as follows. Component of the mitochondrial ribosome (mitoribosome), a dedicated translation machinery responsible for the synthesis of mitochondrial genome-encoded proteins, including at least some of the essential transmembrane subunits of the mitochondrial respiratory chain. The mitoribosomes are attached to the mitochondrial inner membrane and translation products are cotranslationally integrated into the membrane. In Schizosaccharomyces pombe (strain 972 / ATCC 24843) (Fission yeast), this protein is Small ribosomal subunit protein uS10m (rsm10).